Reading from the N-terminus, the 666-residue chain is Chaperone protein HtpG (666 aa).

The tract at residues 1-374 (MSELNPVDNQ…SADLPLNVSR (374 aa)) is a; substrate-binding. The interval 375–593 (ELLQESRDVK…EGELSPQMIQ (219 aa)) is b. The tract at residues 594–666 (MLKQMGQDVP…LRRVNELLMR (73 aa)) is c.

Belongs to the heat shock protein 90 family. Homodimer.

The protein resides in the cytoplasm. Its function is as follows. Molecular chaperone. Has ATPase activity. The chain is Chaperone protein HtpG from Psychrobacter cryohalolentis (strain ATCC BAA-1226 / DSM 17306 / VKM B-2378 / K5).